A 312-amino-acid chain; its full sequence is Probable myosin light chain kinase DDB_G0282429 (312 aa).

Positions 1–28 are disordered; that stretch reads MDRMDSSDEEIDNISDDELQSGDEIEVE. The span at 7–27 shows a compositional bias: acidic residues; that stretch reads SDEEIDNISDDELQSGDEIEV. A Protein kinase domain is found at 38 to 290; it reads YILGNEIGRG…FEQCLIHPWV (253 aa). ATP is bound by residues 44–52 and Lys-67; that span reads IGRGAFSIV. The active-site Proton acceptor is Asp-158.

Belongs to the protein kinase superfamily. CAMK Ser/Thr protein kinase family. CaMK subfamily.

It carries out the reaction L-seryl-[myosin light chain] + ATP = O-phospho-L-seryl-[myosin light chain] + ADP + H(+). The enzyme catalyses L-threonyl-[myosin light chain] + ATP = O-phospho-L-threonyl-[myosin light chain] + ADP + H(+). Its activity is regulated as follows. Does not have a calmodulin-binding domain. Functionally, may phosphorylate a specific serine in the N-terminus of a myosin light chain. The polypeptide is Probable myosin light chain kinase DDB_G0282429 (Dictyostelium discoideum (Social amoeba)).